The primary structure comprises 263 residues: Endonuclease 8 (263 aa).

The active-site Schiff-base intermediate with DNA is the proline 2. Glutamate 3 functions as the Proton donor in the catalytic mechanism. Residue lysine 53 is the Proton donor; for beta-elimination activity of the active site. DNA contacts are provided by glutamine 70, arginine 125, and asparagine 169. The FPG-type zinc-finger motif lies at 229-263 (KVFHRDGEPCERCGGIIEKTTLSSRPFYWCPGCQH). Residue arginine 253 is the Proton donor; for delta-elimination activity of the active site.

It belongs to the FPG family. It depends on Zn(2+) as a cofactor.

It catalyses the reaction 2'-deoxyribonucleotide-(2'-deoxyribose 5'-phosphate)-2'-deoxyribonucleotide-DNA = a 3'-end 2'-deoxyribonucleotide-(2,3-dehydro-2,3-deoxyribose 5'-phosphate)-DNA + a 5'-end 5'-phospho-2'-deoxyribonucleoside-DNA + H(+). Its function is as follows. Involved in base excision repair of DNA damaged by oxidation or by mutagenic agents. Acts as a DNA glycosylase that recognizes and removes damaged bases. Has a preference for oxidized pyrimidines, such as thymine glycol, 5,6-dihydrouracil and 5,6-dihydrothymine. Has AP (apurinic/apyrimidinic) lyase activity and introduces nicks in the DNA strand. Cleaves the DNA backbone by beta-delta elimination to generate a single-strand break at the site of the removed base with both 3'- and 5'-phosphates. In Escherichia coli (strain UTI89 / UPEC), this protein is Endonuclease 8.